A 593-amino-acid polypeptide reads, in one-letter code: Aspartate--tRNA(Asp/Asn) ligase (593 aa).

Glutamate 176 lines the L-aspartate pocket. Residues 200-203 (QIFK) are aspartate. An L-aspartate-binding site is contributed by arginine 222. Residues 222–224 (RDE) and glutamine 231 each bind ATP. Residue histidine 450 participates in L-aspartate binding. Glutamate 490 is an ATP binding site. Arginine 497 is a binding site for L-aspartate. 542–545 (GLDR) serves as a coordination point for ATP.

The protein belongs to the class-II aminoacyl-tRNA synthetase family. Type 1 subfamily. In terms of assembly, homodimer.

The protein resides in the cytoplasm. It carries out the reaction tRNA(Asx) + L-aspartate + ATP = L-aspartyl-tRNA(Asx) + AMP + diphosphate. Aspartyl-tRNA synthetase with relaxed tRNA specificity since it is able to aspartylate not only its cognate tRNA(Asp) but also tRNA(Asn). Reaction proceeds in two steps: L-aspartate is first activated by ATP to form Asp-AMP and then transferred to the acceptor end of tRNA(Asp/Asn). The sequence is that of Aspartate--tRNA(Asp/Asn) ligase from Symbiobacterium thermophilum (strain DSM 24528 / JCM 14929 / IAM 14863 / T).